Here is a 346-residue protein sequence, read N- to C-terminus: MHESVQNYYGKVLQNSSDLKTSACCDASSMPAWLKPLLSQVHPEVSARYYGCGLVAPALLDGCQVLDLGSGSGRDCYVLAQLVGASGSVLGVDMTAEQLAVANAHLDYHAERFGFANVSFRHGYIEDLASLELADGSFDVIVSNCVINLSPDKDSVLREAYRLLKPGGELYFSDVYADRRLADELRQDEVLYGECLGGALYWNDFEHLARRHGFTDPRLVEDQPISITDSALAEKLGDARFYSATYRLFKLDGLEPACEDYGQAVIYRGSIPGAAHAFVLDKHHRIETGRVFPVCGNTWRMLQDTRFAPHFQFIGDFSRHFGLFEGCGGGLPYDRQAAVTAATSCC.

It belongs to the methyltransferase superfamily. Arsenite methyltransferase family.

The catalysed reaction is arsenic triglutathione + [thioredoxin]-dithiol + S-adenosyl-L-methionine + 2 H2O = methylarsonous acid + [thioredoxin]-disulfide + 3 glutathione + S-adenosyl-L-homocysteine + H(+). It catalyses the reaction arsenic triglutathione + 2 [thioredoxin]-dithiol + 2 S-adenosyl-L-methionine + H2O = dimethylarsinous acid + 2 [thioredoxin]-disulfide + 3 glutathione + 2 S-adenosyl-L-homocysteine + 2 H(+). It carries out the reaction arsenic triglutathione + 3 [thioredoxin]-dithiol + 3 S-adenosyl-L-methionine = trimethylarsine + 3 [thioredoxin]-disulfide + 3 glutathione + 3 S-adenosyl-L-homocysteine + 3 H(+). Catalyzes the transfer of a methyl group from AdoMet to arsenite, producing methylated arsenicals. Involved in the conversion of As(III) to dimethylarsenate as the main product in the medium and also produces dimethylarsine and trimethylarsine gases. Reduces the arsenic toxicity in the cell and may contribute to the global arsenic cycling. This Aquipseudomonas alcaligenes (strain ATCC 14909 / DSM 50342 / CCUG 1425 / JCM 20561 / NBRC 14159 / NCIMB 9945 / NCTC 10367 / 1577) (Pseudomonas alcaligenes) protein is Arsenite methyltransferase.